A 128-amino-acid chain; its full sequence is Large ribosomal subunit protein bL12 (128 aa).

Belongs to the bacterial ribosomal protein bL12 family. As to quaternary structure, homodimer. Part of the ribosomal stalk of the 50S ribosomal subunit. Forms a multimeric L10(L12)X complex, where L10 forms an elongated spine to which 2 to 4 L12 dimers bind in a sequential fashion. Binds GTP-bound translation factors.

Functionally, forms part of the ribosomal stalk which helps the ribosome interact with GTP-bound translation factors. Is thus essential for accurate translation. In Picosynechococcus sp. (strain ATCC 27264 / PCC 7002 / PR-6) (Agmenellum quadruplicatum), this protein is Large ribosomal subunit protein bL12.